The following is a 300-amino-acid chain: Ribosomal protein L11 methyltransferase (300 aa).

S-adenosyl-L-methionine is bound by residues threonine 152, glycine 173, aspartate 195, and asparagine 234.

Belongs to the methyltransferase superfamily. PrmA family.

The protein localises to the cytoplasm. It catalyses the reaction L-lysyl-[protein] + 3 S-adenosyl-L-methionine = N(6),N(6),N(6)-trimethyl-L-lysyl-[protein] + 3 S-adenosyl-L-homocysteine + 3 H(+). Functionally, methylates ribosomal protein L11. This chain is Ribosomal protein L11 methyltransferase, found in Burkholderia lata (strain ATCC 17760 / DSM 23089 / LMG 22485 / NCIMB 9086 / R18194 / 383).